We begin with the raw amino-acid sequence, 282 residues long: MTLLDGKALSAKIKEELKEKNQFLKSKGIESCLAVILVGDNPASQTYVKSKAKACEECGIKSLVYHLNENITQNELLALINTLNHDDSVHGILVQLPLPDHICKDLILESIISSKDVDGFHPINVGYLNLGLESGFLPCTPLGVMKLLKAYEIDLEGKDAVIIGASNIVGRPMATMLLNAGATVSVCHIKTKDLSLYTRQADLIIVAAGCVNLLRSDMVKEGVIVVDVGINRLESGKIVGDVDFEEVSKKSSYITPVPGGVGPMTIAMLLENTVKSAKNRLN.

Residues 164-166, Ile-189, and Ile-230 contribute to the NADP(+) site; that span reads GAS.

This sequence belongs to the tetrahydrofolate dehydrogenase/cyclohydrolase family. Homodimer.

The catalysed reaction is (6R)-5,10-methylene-5,6,7,8-tetrahydrofolate + NADP(+) = (6R)-5,10-methenyltetrahydrofolate + NADPH. It carries out the reaction (6R)-5,10-methenyltetrahydrofolate + H2O = (6R)-10-formyltetrahydrofolate + H(+). The protein operates within one-carbon metabolism; tetrahydrofolate interconversion. Functionally, catalyzes the oxidation of 5,10-methylenetetrahydrofolate to 5,10-methenyltetrahydrofolate and then the hydrolysis of 5,10-methenyltetrahydrofolate to 10-formyltetrahydrofolate. In Campylobacter jejuni subsp. jejuni serotype O:2 (strain ATCC 700819 / NCTC 11168), this protein is Bifunctional protein FolD.